Reading from the N-terminus, the 269-residue chain is Cbp/p300-interacting transactivator 2 (269 aa).

The tract at residues 142–200 (AGHQMNGTNQHFRDCNPKHSGGSSTPGGAGGSGTPGGSGGTSGGAGGSSAGGSGGGSTM) is disordered. A compositionally biased stretch (gly residues) spans 165–198 (STPGGAGGSGTPGGSGGTSGGAGGSSAGGSGGGS).

This sequence belongs to the CITED family. As to quaternary structure, interacts (via C-terminus) with EP300 (via CH1 domain); the interaction is stimulated in response to hypoxia. Interacts with PPARA. Interacts (via C-terminus) with TFAP2A, TFAP2B and TFAP2C. Interacts (via C-terminus) with SMAD2. Interacts (via C-terminus) with SMAD3 (via MH2 domain). Interacts with LHX2 (via LIM domains). Interacts with WT1 isoform 1 and isoform 3. In terms of tissue distribution, ubiquitous.

The protein localises to the nucleus. In terms of biological role, transcriptional coactivator of the p300/CBP-mediated transcription complex. Acts as a bridge, linking TFAP2 transcription factors and the p300/CBP transcriptional coactivator complex in order to stimulate TFAP2-mediated transcriptional activation. Positively regulates TGF-beta signaling through its association with the SMAD/p300/CBP-mediated transcriptional coactivator complex. Stimulates the peroxisome proliferator-activated receptors PPARA transcriptional activity. Enhances estrogen-dependent transactivation mediated by estrogen receptors. Also acts as a transcriptional corepressor; interferes with the binding of the transcription factors HIF1A or STAT2 and the p300/CBP transcriptional coactivator complex. Participates in sex determination and early gonad development by stimulating transcription activation of SRY. Plays a role in controlling left-right patterning during embryogenesis; potentiates transcriptional activation of NODAL-mediated gene transcription in the left lateral plate mesoderm (LPM). Plays an essential role in differentiation of the adrenal cortex from the adrenogonadal primordium (AGP); stimulates WT1-mediated transcription activation thereby up-regulating the nuclear hormone receptor NR5A1 promoter activity. Associates with chromatin to the PITX2 P1 promoter region. The sequence is that of Cbp/p300-interacting transactivator 2 (Cited2) from Mus musculus (Mouse).